Reading from the N-terminus, the 288-residue chain is Pantothenate synthetase (288 aa).

ATP is bound at residue 30–37; it reads MGALHEGH. The active-site Proton donor is histidine 37. Residue glutamine 61 participates in (R)-pantoate binding. Residue glutamine 61 coordinates beta-alanine. 147-150 lines the ATP pocket; that stretch reads GEKD. Position 153 (glutamine 153) interacts with (R)-pantoate. ATP-binding positions include leucine 176 and 184 to 187; that span reads ISSR.

The protein belongs to the pantothenate synthetase family. In terms of assembly, homodimer.

It is found in the cytoplasm. It carries out the reaction (R)-pantoate + beta-alanine + ATP = (R)-pantothenate + AMP + diphosphate + H(+). It participates in cofactor biosynthesis; (R)-pantothenate biosynthesis; (R)-pantothenate from (R)-pantoate and beta-alanine: step 1/1. Its function is as follows. Catalyzes the condensation of pantoate with beta-alanine in an ATP-dependent reaction via a pantoyl-adenylate intermediate. The chain is Pantothenate synthetase from Prosthecochloris aestuarii (strain DSM 271 / SK 413).